A 234-amino-acid polypeptide reads, in one-letter code: Leucyl/phenylalanyl-tRNA--protein transferase (234 aa).

It belongs to the L/F-transferase family.

It is found in the cytoplasm. The enzyme catalyses N-terminal L-lysyl-[protein] + L-leucyl-tRNA(Leu) = N-terminal L-leucyl-L-lysyl-[protein] + tRNA(Leu) + H(+). It carries out the reaction N-terminal L-arginyl-[protein] + L-leucyl-tRNA(Leu) = N-terminal L-leucyl-L-arginyl-[protein] + tRNA(Leu) + H(+). It catalyses the reaction L-phenylalanyl-tRNA(Phe) + an N-terminal L-alpha-aminoacyl-[protein] = an N-terminal L-phenylalanyl-L-alpha-aminoacyl-[protein] + tRNA(Phe). Functions in the N-end rule pathway of protein degradation where it conjugates Leu, Phe and, less efficiently, Met from aminoacyl-tRNAs to the N-termini of proteins containing an N-terminal arginine or lysine. The chain is Leucyl/phenylalanyl-tRNA--protein transferase from Pectobacterium atrosepticum (strain SCRI 1043 / ATCC BAA-672) (Erwinia carotovora subsp. atroseptica).